The primary structure comprises 336 residues: Probable allantoicase (336 aa).

It belongs to the allantoicase family.

The enzyme catalyses allantoate + H2O = (S)-ureidoglycolate + urea. It participates in nitrogen metabolism; (S)-allantoin degradation; (S)-ureidoglycolate from allantoate (aminidohydrolase route): step 1/1. The chain is Probable allantoicase from Acinetobacter baumannii (strain ATCC 17978 / DSM 105126 / CIP 53.77 / LMG 1025 / NCDC KC755 / 5377).